The sequence spans 118 residues: Small ribosomal subunit protein uS13 (118 aa).

The tract at residues 92–118 is disordered; sequence RRGLPVRGQRTKTNARTRKGPRKPIKK.

Belongs to the universal ribosomal protein uS13 family. Part of the 30S ribosomal subunit. Forms a loose heterodimer with protein S19. Forms two bridges to the 50S subunit in the 70S ribosome.

In terms of biological role, located at the top of the head of the 30S subunit, it contacts several helices of the 16S rRNA. In the 70S ribosome it contacts the 23S rRNA (bridge B1a) and protein L5 of the 50S subunit (bridge B1b), connecting the 2 subunits; these bridges are implicated in subunit movement. Contacts the tRNAs in the A and P-sites. The sequence is that of Small ribosomal subunit protein uS13 from Yersinia pestis.